A 516-amino-acid chain; its full sequence is UDP-N-acetylmuramyl-tripeptide synthetase (516 aa).

Residue S38 coordinates UDP-N-acetyl-alpha-D-muramoyl-L-alanyl-D-glutamate. 116-122 (GTKGKTT) is a binding site for ATP. UDP-N-acetyl-alpha-D-muramoyl-L-alanyl-D-glutamate-binding positions include 162-163 (TT), S189, and R197. Residue K231 is modified to N6-carboxylysine.

This sequence belongs to the MurCDEF family. MurE subfamily. In terms of processing, carboxylation is probably crucial for Mg(2+) binding and, consequently, for the gamma-phosphate positioning of ATP.

It localises to the cytoplasm. The protein operates within cell wall biogenesis; peptidoglycan biosynthesis. Its function is as follows. Catalyzes the addition of an amino acid to the nucleotide precursor UDP-N-acetylmuramoyl-L-alanyl-D-glutamate (UMAG) in the biosynthesis of bacterial cell-wall peptidoglycan. In Lactobacillus delbrueckii subsp. bulgaricus (strain ATCC 11842 / DSM 20081 / BCRC 10696 / JCM 1002 / NBRC 13953 / NCIMB 11778 / NCTC 12712 / WDCM 00102 / Lb 14), this protein is UDP-N-acetylmuramyl-tripeptide synthetase.